Here is a 158-residue protein sequence, read N- to C-terminus: 2-C-methyl-D-erythritol 2,4-cyclodiphosphate synthase (158 aa).

2 residues coordinate a divalent metal cation: Asp-9 and His-11. 4-CDP-2-C-methyl-D-erythritol 2-phosphate-binding positions include 9–11 and 35–36; these read DVH and HS. His-43 contributes to the a divalent metal cation binding site. 4-CDP-2-C-methyl-D-erythritol 2-phosphate-binding positions include 57-59, 62-66, 101-107, 133-136, Phe-140, and Arg-143; these read DIG, FPDTD, AQAPKMA, and TTTE.

Belongs to the IspF family. As to quaternary structure, homotrimer. The cofactor is a divalent metal cation.

It catalyses the reaction 4-CDP-2-C-methyl-D-erythritol 2-phosphate = 2-C-methyl-D-erythritol 2,4-cyclic diphosphate + CMP. It functions in the pathway isoprenoid biosynthesis; isopentenyl diphosphate biosynthesis via DXP pathway; isopentenyl diphosphate from 1-deoxy-D-xylulose 5-phosphate: step 4/6. Functionally, involved in the biosynthesis of isopentenyl diphosphate (IPP) and dimethylallyl diphosphate (DMAPP), two major building blocks of isoprenoid compounds. Catalyzes the conversion of 4-diphosphocytidyl-2-C-methyl-D-erythritol 2-phosphate (CDP-ME2P) to 2-C-methyl-D-erythritol 2,4-cyclodiphosphate (ME-CPP) with a corresponding release of cytidine 5-monophosphate (CMP). In Vibrio cholerae serotype O1 (strain ATCC 39541 / Classical Ogawa 395 / O395), this protein is 2-C-methyl-D-erythritol 2,4-cyclodiphosphate synthase.